The following is a 277-amino-acid chain: Energy-coupling factor transporter transmembrane protein EcfT (277 aa).

6 consecutive transmembrane segments (helical) span residues 39-59 (ITIL…YAII), 61-81 (FFCF…WNGV), 85-105 (IGLI…GHVF), 121-141 (AIYI…MTVT), 163-183 (VPVD…PTLF), and 254-274 (SKYD…LLIF).

Belongs to the energy-coupling factor EcfT family. Forms a stable energy-coupling factor (ECF) transporter complex composed of 2 membrane-embedded substrate-binding proteins (S component), 2 ATP-binding proteins (A component) and 2 transmembrane proteins (T component). May be able to interact with more than 1 S component at a time.

The protein resides in the cell membrane. Its function is as follows. Transmembrane (T) component of an energy-coupling factor (ECF) ABC-transporter complex. Unlike classic ABC transporters this ECF transporter provides the energy necessary to transport a number of different substrates. The chain is Energy-coupling factor transporter transmembrane protein EcfT from Lactobacillus helveticus (strain DPC 4571).